The sequence spans 86 residues: MRLFLSLPVLVVALLMILEGPGPAQGAPEAVDTSSGLDKLKEFGTTLEDKVREFFNRVKESDIPAKTRNWFSETLQKVKEKLRIES.

The N-terminal stretch at 1 to 26 is a signal peptide; the sequence is MRLFLSLPVLVVALLMILEGPGPAQG.

This sequence belongs to the apolipoprotein C1 family.

It is found in the secreted. Its function is as follows. Inhibitor of lipoprotein binding to the low density lipoprotein (LDL) receptor, LDL receptor-related protein, and very low density lipoprotein (VLDL) receptor. Associates with high density lipoproteins (HDL) and the triacylglycerol-rich lipoproteins in the plasma and makes up about 10% of the protein of the VLDL and 2% of that of HDL. Appears to interfere directly with fatty acid uptake and is also the major plasma inhibitor of cholesteryl ester transfer protein (CETP). Binds free fatty acids and reduces their intracellular esterification. Modulates the interaction of APOE with beta-migrating VLDL and inhibits binding of beta-VLDL to the LDL receptor-related protein. The protein is Apolipoprotein C-I (APOC1) of Aotus nancymaae (Ma's night monkey).